The chain runs to 607 residues: V-type proton ATPase catalytic subunit A (607 aa).

246–253 (GAFGCGKT) serves as a coordination point for ATP.

The protein belongs to the ATPase alpha/beta chains family. As to quaternary structure, V-ATPase is a heteromultimeric enzyme composed of a peripheral catalytic V1 complex (components A to H) attached to an integral membrane V0 proton pore complex (components: a, c, c', c'', d, e, f and VOA1).

It localises to the vacuole membrane. It catalyses the reaction ATP + H2O + 4 H(+)(in) = ADP + phosphate + 5 H(+)(out). Its function is as follows. Catalytic subunit of the V1 complex of vacuolar(H+)-ATPase (V-ATPase), a multisubunit enzyme composed of a peripheral complex (V1) that hydrolyzes ATP and a membrane integral complex (V0) that translocates protons. V-ATPase is responsible for acidifying and maintaining the pH of intracellular compartments. In Neurospora crassa (strain ATCC 24698 / 74-OR23-1A / CBS 708.71 / DSM 1257 / FGSC 987), this protein is V-type proton ATPase catalytic subunit A (vma-1).